A 524-amino-acid polypeptide reads, in one-letter code: Origin of replication complex subunit 5 (524 aa).

The span at 1-19 (MSQPVTPRRTTRSSASASP) shows a compositional bias: low complexity. The tract at residues 1-56 (MSQPVTPRRTTRSSASASPSPAPASPTSPPKSRPKPSPRRQLLAAAAAPPKEDGSS) is disordered. Pro residues predominate over residues 20-31 (SPAPASPTSPPK). The segment covering 39-49 (RRQLLAAAAAP) has biased composition (low complexity). 90 to 97 (GGAATGKT) lines the ATP pocket.

It belongs to the ORC5 family. In terms of assembly, component of the origin recognition complex (ORC) composed of at least ORC1, ORC2, ORC3, ORC4, ORC5 and ORC6. ORC is regulated in a cell-cycle and development dependent manner. It is sequentially assembled at the exit from anaphase of mitosis and disassembled as cells enter S phase.

The protein resides in the nucleus. Component of the origin recognition complex (ORC) that binds origins of replication. DNA-binding is ATP-dependent. The specific DNA sequences that define origins of replication have not been identified yet. ORC is required to assemble the pre-replication complex necessary to initiate DNA replication. The sequence is that of Origin of replication complex subunit 5 from Oryza sativa subsp. indica (Rice).